Reading from the N-terminus, the 466-residue chain is Cysteine--tRNA ligase (466 aa).

Cys28 lines the Zn(2+) pocket. A 'HIGH' region motif is present at residues 30–40; sequence PTVYNYIHIGN. Zn(2+) contacts are provided by Cys208, His233, and Glu237. The short motif at 265–269 is the 'KMSKS' region element; that stretch reads KMSKS. Lys268 provides a ligand contact to ATP. A Phosphoserine modification is found at Ser269.

It belongs to the class-I aminoacyl-tRNA synthetase family. As to quaternary structure, monomer. Zn(2+) is required as a cofactor.

It is found in the cytoplasm. The catalysed reaction is tRNA(Cys) + L-cysteine + ATP = L-cysteinyl-tRNA(Cys) + AMP + diphosphate. This is Cysteine--tRNA ligase from Shouchella clausii (strain KSM-K16) (Alkalihalobacillus clausii).